We begin with the raw amino-acid sequence, 374 residues long: Peptide chain release factor 2 (374 aa).

Gln256 bears the N5-methylglutamine mark.

It belongs to the prokaryotic/mitochondrial release factor family. In terms of processing, methylated by PrmC. Methylation increases the termination efficiency of RF2.

Its subcellular location is the cytoplasm. Its function is as follows. Peptide chain release factor 2 directs the termination of translation in response to the peptide chain termination codons UGA and UAA. In Mycobacterium leprae (strain Br4923), this protein is Peptide chain release factor 2.